Reading from the N-terminus, the 689-residue chain is Centrosomal protein of 78 kDa (689 aa).

Phosphoserine is present on residues serine 325 and serine 327. Disordered stretches follow at residues 432 to 451 (SSEV…VPEK), 563 to 589 (PQMT…EPKQ), and 614 to 689 (DSFP…TESH). Positions 450–505 (EKTSIEQEALQEKLEECLKQLKEERVIRLKVDKRVSELEHENAQLRNINFSLSEAL) form a coiled coil. Composition is skewed to basic and acidic residues over residues 573 to 587 (PKEE…KPEP) and 666 to 689 (QRKE…TESH).

The protein belongs to the CEP78 family. As to quaternary structure, interacts with PLK4. Interacts with FAM161A. Interacts with IFT20; regulating IFT20 stability and localization. Interacts with TTC21A; regulating TTC21A stability and localization. Interacts with USP16; promoting USP16-dependent deubiquitination of tektins. Interacts with DCAF1/VPRBP; promoting localization of the EDVP complex to centrosomes. Interacts with CEP350; promoting CEP78 localization to centrosome and centriole. In terms of tissue distribution, widely expressed. Expressed in different retinal cell types with higher expression in cone compared to rod cells (at protein level).

The protein resides in the cytoplasm. Its subcellular location is the cytoskeleton. It localises to the microtubule organizing center. It is found in the centrosome. The protein localises to the centriole. The protein resides in the cilium basal body. Functionally, centriole wall protein that localizes to mature centrioles and regulates centriole and cilia biogenesis. Involved in centrosome duplication: required for efficient PLK4 centrosomal localization and PLK4-induced overduplication of centrioles. Involved in cilium biogenesis and controls cilium length. Acts as a regulator of protein stability by preventing ubiquitination of centrosomal proteins, such as CCP110 and tektins. Associates with the EDVP complex, preventing ubiquitination and degradation of CCP110. Promotes deubiquitination of tektin proteins (TEKT1, TEKT2, TEK3, TEKT4 and TEKT5) via its interaction with USP16. This Homo sapiens (Human) protein is Centrosomal protein of 78 kDa.